A 427-amino-acid chain; its full sequence is Glutamate-1-semialdehyde 2,1-aminomutase (427 aa).

K265 bears the N6-(pyridoxal phosphate)lysine mark.

The protein belongs to the class-III pyridoxal-phosphate-dependent aminotransferase family. HemL subfamily. In terms of assembly, homodimer. Requires pyridoxal 5'-phosphate as cofactor.

It localises to the cytoplasm. The catalysed reaction is (S)-4-amino-5-oxopentanoate = 5-aminolevulinate. Its pathway is porphyrin-containing compound metabolism; protoporphyrin-IX biosynthesis; 5-aminolevulinate from L-glutamyl-tRNA(Glu): step 2/2. The polypeptide is Glutamate-1-semialdehyde 2,1-aminomutase (Neisseria meningitidis serogroup A / serotype 4A (strain DSM 15465 / Z2491)).